A 427-amino-acid chain; its full sequence is Histidinol dehydrogenase (427 aa).

3 residues coordinate NAD(+): Tyr123, Gln185, and Asn208. Positions 231, 253, and 256 each coordinate substrate. Zn(2+) is bound by residues Gln253 and His256. Residues Glu321 and His322 each act as proton acceptor in the active site. 4 residues coordinate substrate: His322, Asp355, Glu409, and His414. Asp355 lines the Zn(2+) pocket. His414 is a Zn(2+) binding site.

It belongs to the histidinol dehydrogenase family. The cofactor is Zn(2+).

It carries out the reaction L-histidinol + 2 NAD(+) + H2O = L-histidine + 2 NADH + 3 H(+). The protein operates within amino-acid biosynthesis; L-histidine biosynthesis; L-histidine from 5-phospho-alpha-D-ribose 1-diphosphate: step 9/9. Catalyzes the sequential NAD-dependent oxidations of L-histidinol to L-histidinaldehyde and then to L-histidine. The sequence is that of Histidinol dehydrogenase from Oceanobacillus iheyensis (strain DSM 14371 / CIP 107618 / JCM 11309 / KCTC 3954 / HTE831).